The chain runs to 35 residues: Jingzhaotoxin F5-21.66 (35 aa).

Disulfide bonds link cysteine 2/cysteine 16, cysteine 9/cysteine 21, and cysteine 15/cysteine 29.

Belongs to the neurotoxin 10 (Hwtx-1) family. 48 (Jztx-F5) subfamily. Expressed by the venom gland.

The protein localises to the secreted. Probable ion channel inhibitor. In Chilobrachys guangxiensis (Chinese earth tiger tarantula), this protein is Jingzhaotoxin F5-21.66.